The following is a 343-amino-acid chain: Thromboxane A2 receptor (343 aa).

At M1–W29 the chain is on the extracellular side. N-linked (GlcNAc...) asparagine glycans are attached at residues N4 and N16. A helical membrane pass occupies residues F30–A52. The Cytoplasmic segment spans residues R53 to F66. A helical membrane pass occupies residues L67 to S87. Residues Q88 to R106 are Extracellular-facing. C105 and C183 form a disulfide bridge. Residues F107–S128 form a helical membrane-spanning segment. Residues E129–A149 are Cytoplasmic-facing. Residues W150–G172 traverse the membrane as a helical segment. The Extracellular segment spans residues R173 to D193. A helical membrane pass occupies residues V194–V219. The Cytoplasmic portion of the chain corresponds to A220–Q246. The chain crosses the membrane as a helical span at residues L247 to L270. The Extracellular segment spans residues R271–E289. The chain crosses the membrane as a helical span at residues L290–F311. Topologically, residues R312 to Q343 are cytoplasmic. S329 and S331 each carry phosphoserine.

The protein belongs to the G-protein coupled receptor 1 family. In terms of assembly, interacts with RPGRIP1L. Interacts with RACK1; the interaction regulates TBXA2R cell surface expression.

Its subcellular location is the cell membrane. Receptor for thromboxane A2 (TXA2), a potent stimulator of platelet aggregation. The activity of this receptor is mediated by a G-protein that activates a phosphatidylinositol-calcium second messenger system. In the kidney, the binding of TXA2 to glomerular TP receptors causes intense vasoconstriction. Activates phospholipase C and adenylyl cyclase. The sequence is that of Thromboxane A2 receptor (TBXA2R) from Chlorocebus aethiops (Green monkey).